Consider the following 541-residue polypeptide: Solute carrier family 2, facilitated glucose transporter member 10 (541 aa).

The Cytoplasmic segment spans residues 1-15 (MGHSPPVLPLCASVS). Residues 16–36 (LLGGLTFGYELAVISGALLPL) traverse the membrane as a helical segment. Residues 37–48 (QLDFGLSCLEQE) lie on the Extracellular side of the membrane. The helical transmembrane segment at 49-69 (FLVGSLLLGALLASLVGGFLI) threads the bilayer. The Cytoplasmic portion of the chain corresponds to 70 to 77 (DCYGRKQA). A helical membrane pass occupies residues 78–98 (ILGSNLVLLAGSLTLGLAGSL). Residues 99-106 (AWLVLGRA) lie on the Extracellular side of the membrane. A helical membrane pass occupies residues 107–127 (VVGFAISLSSMACCIYVSELV). Residues 128-134 (GPRQRGV) lie on the Cytoplasmic side of the membrane. The chain crosses the membrane as a helical span at residues 135 to 155 (LVSLYEAGITVGILLSYALNY). Over 156–166 (ALAGTPWGWRH) the chain is Extracellular. The chain crosses the membrane as a helical span at residues 167-187 (MFGWATAPAVLQSLSLLFLPA). The Cytoplasmic segment spans residues 188–233 (GTDETATHKDLIPLQGGEAPKLGPGRPRYSFLDLFRARDNMRGRTT). The helical transmembrane segment at 234-254 (VGLGLVLFQQLTGQPNVLCYA) threads the bilayer. Residue 242–243 (QQ) participates in D-glucose binding. Residues 255–269 (STIFSSVGFHGGSSA) lie on the Extracellular side of the membrane. Residues 270-290 (VLASVGLGAVKVAATLTAMGL) traverse the membrane as a helical segment. Over 291–298 (VDRAGRRA) the chain is Cytoplasmic. The chain crosses the membrane as a helical span at residues 299–319 (LLLAGCALMALSVSGIGLVSF). At 320–414 (AVPMDSGPSC…HALLRWTALL (95 aa)) the chain is on the extracellular side. Asn-334 is a glycosylation site (N-linked (GlcNAc...) asparagine). The disordered stretch occupies residues 340 to 388 (GLPGDSGLLQDSSLPPIPRTNEDQREPILSTAKKTKPHPRSGDPSAPPR). A helical membrane pass occupies residues 415 to 435 (CLMVFVSAFSFGFGPVTWLVL). Trp-432 is a binding site for D-glucose. Residues 436–445 (SEIYPVEIRG) lie on the Cytoplasmic side of the membrane. A helical transmembrane segment spans residues 446 to 466 (RAFAFCNSFNWAANLFISLSF). The Extracellular portion of the chain corresponds to 467 to 476 (LDLIGTIGLS). A helical transmembrane segment spans residues 477–497 (WTFLLYGLTAVLGLGFIYLFV). At 498 to 541 (PETKGQSLAEIDQQFQKRRFTLSFGHRQNSTGIPYSRIEISAAS) the chain is on the cytoplasmic side.

The protein belongs to the major facilitator superfamily. Sugar transporter (TC 2.A.1.1) family. Glucose transporter subfamily. As to expression, widely expressed; highest levels in liver and pancreas.

It is found in the endomembrane system. The protein localises to the cytoplasm. It localises to the perinuclear region. The catalysed reaction is D-glucose(out) = D-glucose(in). Its function is as follows. Facilitative glucose transporter required for the development of the cardiovascular system. The sequence is that of Solute carrier family 2, facilitated glucose transporter member 10 from Homo sapiens (Human).